Consider the following 106-residue polypeptide: Large ribosomal subunit protein eL34 (106 aa).

This sequence belongs to the eukaryotic ribosomal protein eL34 family.

The protein is Large ribosomal subunit protein eL34 of Hyperthermus butylicus (strain DSM 5456 / JCM 9403 / PLM1-5).